The chain runs to 119 residues: Beta-2-microglobulin (119 aa).

A signal peptide spans M1 to A20. An Ig-like C1-type domain is found at P25 to K114. C45 and C100 are joined by a disulfide.

The protein belongs to the beta-2-microglobulin family. As to quaternary structure, heterodimer of an alpha chain and a beta chain. Beta-2-microglobulin is the beta-chain of major histocompatibility complex class I molecules.

It is found in the secreted. In terms of biological role, component of the class I major histocompatibility complex (MHC). Involved in the presentation of peptide antigens to the immune system. This Saimiri boliviensis boliviensis (Bolivian squirrel monkey) protein is Beta-2-microglobulin (B2M).